Consider the following 865-residue polypeptide: Protein translocase subunit SecA (865 aa).

Residues Gln93, 111-115 (GEGKT), and Asp501 each bind ATP. Positions 841, 843, 852, and 853 each coordinate Zn(2+).

This sequence belongs to the SecA family. Monomer and homodimer. Part of the essential Sec protein translocation apparatus which comprises SecA, SecYEG and auxiliary proteins SecDF-YajC and YidC. Requires Zn(2+) as cofactor.

The protein resides in the cell inner membrane. It localises to the cytoplasm. It catalyses the reaction ATP + H2O + cellular proteinSide 1 = ADP + phosphate + cellular proteinSide 2.. In terms of biological role, part of the Sec protein translocase complex. Interacts with the SecYEG preprotein conducting channel. Has a central role in coupling the hydrolysis of ATP to the transfer of proteins into and across the cell membrane, serving as an ATP-driven molecular motor driving the stepwise translocation of polypeptide chains across the membrane. The chain is Protein translocase subunit SecA from Helicobacter pylori (strain J99 / ATCC 700824) (Campylobacter pylori J99).